Here is a 291-residue protein sequence, read N- to C-terminus: Alpha/beta-gliadin A-II (291 aa).

Positions methionine 1–alanine 20 are cleaved as a signal peptide. The span at asparagine 32–glutamine 55 shows a compositional bias: low complexity. Disordered regions lie at residues asparagine 32–glutamine 120 and glutamine 227–glutamine 250. 2 stretches are compositionally biased toward pro residues: residues proline 56–serine 71 and phenylalanine 81–glutamine 104. 2 stretches are compositionally biased toward low complexity: residues proline 105–glutamine 120 and glutamine 227–glutamine 237. Over residues proline 238 to glutamine 250 the composition is skewed to polar residues.

It belongs to the gliadin/glutenin family. Substrate of transglutaminase.

Its function is as follows. Gliadin is the major seed storage protein in wheat. The chain is Alpha/beta-gliadin A-II from Triticum aestivum (Wheat).